Consider the following 119-residue polypeptide: Ribosome-binding factor A (119 aa).

The protein belongs to the RbfA family. As to quaternary structure, monomer. Binds 30S ribosomal subunits, but not 50S ribosomal subunits or 70S ribosomes.

The protein resides in the cytoplasm. Functionally, one of several proteins that assist in the late maturation steps of the functional core of the 30S ribosomal subunit. Associates with free 30S ribosomal subunits (but not with 30S subunits that are part of 70S ribosomes or polysomes). Required for efficient processing of 16S rRNA. May interact with the 5'-terminal helix region of 16S rRNA. This is Ribosome-binding factor A from Buchnera aphidicola subsp. Baizongia pistaciae (strain Bp).